The following is a 453-amino-acid chain: Plasticin (453 aa).

The tract at residues 1-51 is head; that stretch reads MSHSTFSHLFSPHFGAPVYSPVSSRIGGRYVSSSVPTRSVDFRSRSSAPAP. A coil 1A region spans residues 71 to 112; it reads FATRSNEKRELQELNDRFASFIEKVRHLEQQNSKLILELGQY. The IF rod domain occupies 77–390; it reads EKRELQELND…KLLEGEENRI (314 aa). The interval 113–126 is linker 1; that stretch reads KDQHQGSTGRINEL. The coil 1B stretch occupies residues 127 to 222; that stretch reads CQQEMRELRR…KMHDEEIQDV (96 aa). The segment at 223 to 245 is linker 12; the sequence is QVSVQSQQMKMEVMETSSRPDLT. Residues 246-391 form a coil 2 region; sequence GALRDIRAQY…LLEGEENRIV (146 aa). The segment at 392–453 is tail; that stretch reads VPIMKMPSMS…KKDSHGQGKD (62 aa). Residues 421 to 453 form a disordered region; that stretch reads IKTVETRDGEVVKESTKEKGRDEKKDSHGQGKD. The span at 424-453 shows a compositional bias: basic and acidic residues; that stretch reads VETRDGEVVKESTKEKGRDEKKDSHGQGKD.

This sequence belongs to the intermediate filament family. In terms of tissue distribution, optic nerve.

Type III neurofilament. The protein is Plasticin of Carassius auratus (Goldfish).